A 1223-amino-acid chain; its full sequence is Rho family-interacting cell polarization regulator 1 (1223 aa).

At Ser-22 the chain carries Phosphoserine. A coiled-coil region spans residues 83-112; it reads RGLTAYLEVHQQEQEKLQRQIKESKRNSRL. Residues Ser-345 and Ser-347 each carry the phosphoserine modification. Residue Thr-351 is modified to Phosphothreonine. Residues 371-411 form a disordered region; sequence NGTAWSLSSESSDDSSSPQLSGTARHSTPKPLVQQPEPLPV. 2 stretches are compositionally biased toward low complexity: residues 376–391 and 399–411; these read SLSS…PQLS and PKPL…PLPV. Phosphoserine is present on residues Ser-451, Ser-454, and Ser-468. 2 stretches are compositionally biased toward low complexity: residues 566–586 and 595–655; these read TTIG…GSVP and TPSP…TSPT. 2 disordered regions span residues 566-771 and 856-887; these read TTIG…QHSE and FLND…LDSS. Over residues 656-665 the composition is skewed to polar residues; the sequence is QEAKMSTHTT. Over residues 673 to 688 the composition is skewed to low complexity; it reads TTTSPISTTESPSPST. Composition is skewed to polar residues over residues 693 to 703 and 725 to 741; these read ISSSSAESTGP and ASCT…SKPL. At Ser-748 the chain carries Phosphoserine. Low complexity predominate over residues 748–767; sequence SPEQIPKSPSSSPSSSAPEP. Residues 858 to 867 are compositionally biased toward acidic residues; it reads NDDEDEDNDG. Residues 868–885 are compositionally biased toward basic and acidic residues; it reads PGDRHTSSPEVVAEDRLD. Ser-874 and Ser-875 each carry phosphoserine.

The protein belongs to the RIPOR family. As to quaternary structure, interacts (via N-terminus) with RHOA (GTP-bound form); this interaction links active RHOA to STK24 and STK26 kinases. Interacts with RHOB. Interacts with RHOC. Interacts (via C-terminus) with PDCD10; this interaction occurs in a Rho-independent manner. Interacts (via C-terminus) with STK24; this interaction occurs in a PDCD10-dependent and Rho-independent manner. Interacts (via C-terminus) with STK26; this interaction occurs in a PDCD10-dependent and Rho-independent manner. Interacts (via N-terminus) with 14-3-3 proteins; these interactions occur in a Rho-dependent manner. As to expression, expressed in the kidney exclusively by glomerular podocytes.

The protein resides in the cytoplasm. It is found in the golgi apparatus. Its function is as follows. Downstream effector protein for Rho-type small GTPases that plays a role in cell polarity and directional migration. Acts as an adapter protein, linking active Rho proteins to STK24 and STK26 kinases, and hence positively regulates Golgi reorientation in polarized cell migration upon Rho activation. Involved in the subcellular relocation of STK26 from the Golgi to cytoplasm punctae in a Rho- and PDCD10-dependent manner upon serum stimulation. The sequence is that of Rho family-interacting cell polarization regulator 1 from Mus musculus (Mouse).